We begin with the raw amino-acid sequence, 189 residues long: Crossover junction endodeoxyribonuclease RuvC (189 aa).

Residues D8, E67, and D139 contribute to the active site. Residues D8, E67, and D139 each coordinate Mg(2+).

This sequence belongs to the RuvC family. As to quaternary structure, homodimer which binds Holliday junction (HJ) DNA. The HJ becomes 2-fold symmetrical on binding to RuvC with unstacked arms; it has a different conformation from HJ DNA in complex with RuvA. In the full resolvosome a probable DNA-RuvA(4)-RuvB(12)-RuvC(2) complex forms which resolves the HJ. It depends on Mg(2+) as a cofactor.

It localises to the cytoplasm. The catalysed reaction is Endonucleolytic cleavage at a junction such as a reciprocal single-stranded crossover between two homologous DNA duplexes (Holliday junction).. In terms of biological role, the RuvA-RuvB-RuvC complex processes Holliday junction (HJ) DNA during genetic recombination and DNA repair. Endonuclease that resolves HJ intermediates. Cleaves cruciform DNA by making single-stranded nicks across the HJ at symmetrical positions within the homologous arms, yielding a 5'-phosphate and a 3'-hydroxyl group; requires a central core of homology in the junction. The consensus cleavage sequence is 5'-(A/T)TT(C/G)-3'. Cleavage occurs on the 3'-side of the TT dinucleotide at the point of strand exchange. HJ branch migration catalyzed by RuvA-RuvB allows RuvC to scan DNA until it finds its consensus sequence, where it cleaves and resolves the cruciform DNA. The chain is Crossover junction endodeoxyribonuclease RuvC from Histophilus somni (strain 129Pt) (Haemophilus somnus).